The chain runs to 159 residues: MSHNAMEHWKSKLSKTSTSTYVLLAVIAVVFLVTIRRPNGSKGKSSKKRASKKNKKGKNQFEKAPVPLTLEEQIDNVSLRYGNELEGRSKDLINRFDVEDEKDIYERNYCNEMLLKLLIELDSIDLINVDESLRRPLKEKRKGVIKEIQAMLKSLDSLK.

At Met-1 to Lys-12 the chain is on the perinuclear space side. A helical; Signal-anchor for type II membrane protein transmembrane segment spans residues Leu-13–Ile-35. Residues Arg-36–Lys-159 lie on the Cytoplasmic side of the membrane. Positions Asn-39–Ala-64 are disordered. Residues Lys-44–Lys-58 are compositionally biased toward basic residues. One can recognise a BAG domain in the interval Gln-73–Lys-159.

As to quaternary structure, interacts with the HSP70 family members SSA1, SSA4, and SSB1. These interactions are strongly reduced by ADP and ATP.

It is found in the endoplasmic reticulum membrane. The protein localises to the nucleus membrane. Functionally, stimulator of ATPase activity of molecular chaperones of the HSP70 family (principally of the SSA class). Stimulation is important for HSP70-substrate complex dissociation after folding of newly synthesized or refolded proteins. SNL1 is probably involved in nuclear pore biogenesis and in particular the folding or refolding of misfolded NUP116, GLE2 and NIC96. The polypeptide is HSP70 co-chaperone SNL1 (SNL1) (Saccharomyces cerevisiae (strain ATCC 204508 / S288c) (Baker's yeast)).